The sequence spans 309 residues: D-alanine--D-alanine ligase (309 aa).

The 206-residue stretch at 99-304 (KRVLLQAGIP…FPDLVQKIVD (206 aa)) folds into the ATP-grasp domain. 132–187 (LKELGLPVVIKAPTQGSTIGTFIVREEGELEPAIAGALKYDLSFMAEAYLAGPEIT) serves as a coordination point for ATP. Mg(2+) is bound by residues aspartate 258, glutamate 271, and asparagine 273.

This sequence belongs to the D-alanine--D-alanine ligase family. Requires Mg(2+) as cofactor. The cofactor is Mn(2+).

It is found in the cytoplasm. It catalyses the reaction 2 D-alanine + ATP = D-alanyl-D-alanine + ADP + phosphate + H(+). It functions in the pathway cell wall biogenesis; peptidoglycan biosynthesis. Its function is as follows. Cell wall formation. The sequence is that of D-alanine--D-alanine ligase from Moorella thermoacetica (strain ATCC 39073 / JCM 9320).